Reading from the N-terminus, the 72-residue chain is Translation initiation factor IF-1 (72 aa).

One can recognise an S1-like domain in the interval 1-72 (MAKEDVIEMQ…SKGRIVFRAR (72 aa)).

Belongs to the IF-1 family. In terms of assembly, component of the 30S ribosomal translation pre-initiation complex which assembles on the 30S ribosome in the order IF-2 and IF-3, IF-1 and N-formylmethionyl-tRNA(fMet); mRNA recruitment can occur at any time during PIC assembly.

The protein localises to the cytoplasm. In terms of biological role, one of the essential components for the initiation of protein synthesis. Stabilizes the binding of IF-2 and IF-3 on the 30S subunit to which N-formylmethionyl-tRNA(fMet) subsequently binds. Helps modulate mRNA selection, yielding the 30S pre-initiation complex (PIC). Upon addition of the 50S ribosomal subunit IF-1, IF-2 and IF-3 are released leaving the mature 70S translation initiation complex. The sequence is that of Translation initiation factor IF-1 from Pseudoalteromonas translucida (strain TAC 125).